Reading from the N-terminus, the 397-residue chain is Elongation factor Tu (397 aa).

The region spanning 10 to 207 is the tr-type G domain; sequence KPHVNIGTIG…VLDEYVKEPV (198 aa). The segment at 19–26 is G1; it reads GHIDHGKT. 19–26 serves as a coordination point for GTP; sequence GHIDHGKT. Threonine 26 serves as a coordination point for Mg(2+). Positions 60 to 64 are G2; the sequence is GITIS. Positions 81 to 84 are G3; the sequence is DCPG. Residues 81–85 and 136–139 contribute to the GTP site; these read DCPGH and NKCD. The G4 stretch occupies residues 136 to 139; that stretch reads NKCD. Residues 174-176 form a G5 region; sequence SAL.

Belongs to the TRAFAC class translation factor GTPase superfamily. Classic translation factor GTPase family. EF-Tu/EF-1A subfamily. Monomer.

It localises to the cytoplasm. The enzyme catalyses GTP + H2O = GDP + phosphate + H(+). Its function is as follows. GTP hydrolase that promotes the GTP-dependent binding of aminoacyl-tRNA to the A-site of ribosomes during protein biosynthesis. The polypeptide is Elongation factor Tu (Desulforapulum autotrophicum (strain ATCC 43914 / DSM 3382 / VKM B-1955 / HRM2) (Desulfobacterium autotrophicum)).